We begin with the raw amino-acid sequence, 134 residues long: D-ribose pyranase (134 aa).

The active-site Proton donor is the H20. Substrate-binding positions include D28, H101, and 123 to 125; that span reads YCN.

Belongs to the RbsD / FucU family. RbsD subfamily. Homodecamer.

It is found in the cytoplasm. The enzyme catalyses beta-D-ribopyranose = beta-D-ribofuranose. Its pathway is carbohydrate metabolism; D-ribose degradation; D-ribose 5-phosphate from beta-D-ribopyranose: step 1/2. Functionally, catalyzes the interconversion of beta-pyran and beta-furan forms of D-ribose. The chain is D-ribose pyranase from Pseudomonas fluorescens (strain Pf0-1).